The primary structure comprises 285 residues: Small ribosomal subunit protein uS2 (285 aa).

The segment at 231–285 (GGKSGQAAAEPMAEWERELLEQHNAQQAEQAEAPAAEAPAEPAEAPAAEAAPQGE) is disordered. The segment covering 255–285 (AQQAEQAEAPAAEAPAEPAEAPAAEAAPQGE) has biased composition (low complexity).

It belongs to the universal ribosomal protein uS2 family.

The polypeptide is Small ribosomal subunit protein uS2 (Micrococcus luteus (strain ATCC 4698 / DSM 20030 / JCM 1464 / CCM 169 / CCUG 5858 / IAM 1056 / NBRC 3333 / NCIMB 9278 / NCTC 2665 / VKM Ac-2230) (Micrococcus lysodeikticus)).